The sequence spans 262 residues: Sulfite reductase, dissimilatory-type subunit beta (262 aa).

7 residues coordinate [4Fe-4S] cluster: Cys151, Cys188, Cys189, Cys193, Cys231, Cys258, and Cys261. Cys193 contributes to the siroheme binding site.

As to quaternary structure, heterohexamer of two alpha, two beta and two gamma subunits. [4Fe-4S] cluster is required as a cofactor. It depends on siroheme as a cofactor.

The catalysed reaction is [DsrC protein]-trisulfide + NAD(+) + 3 H2O = [DsrC protein]-dithiol + sulfite + NADH + 3 H(+). Catalyzes the reduction of sulfite to sulfide. This is the terminal oxidation reaction in sulfate respiration, a process catalyzed by the sulfate-reducing bacteria. This is Sulfite reductase, dissimilatory-type subunit beta (dsrB) from Megalodesulfovibrio gigas (strain ATCC 19364 / DSM 1382 / NCIMB 9332 / VKM B-1759) (Desulfovibrio gigas).